The following is a 177-amino-acid chain: Large ribosomal subunit protein uL6 (177 aa).

This sequence belongs to the universal ribosomal protein uL6 family. In terms of assembly, part of the 50S ribosomal subunit.

Functionally, this protein binds to the 23S rRNA, and is important in its secondary structure. It is located near the subunit interface in the base of the L7/L12 stalk, and near the tRNA binding site of the peptidyltransferase center. This Rhizorhabdus wittichii (strain DSM 6014 / CCUG 31198 / JCM 15750 / NBRC 105917 / EY 4224 / RW1) (Sphingomonas wittichii) protein is Large ribosomal subunit protein uL6.